Here is a 339-residue protein sequence, read N- to C-terminus: Serine/threonine-protein kinase SAPK2 (339 aa).

Positions 4–260 constitute a Protein kinase domain; sequence YEVIKDIGSG…IPEIKNHPWF (257 aa). ATP is bound by residues 10-18 and K33; that span reads IGSGNFGVA. D123 functions as the Proton acceptor in the catalytic mechanism. Residues 253-339 are C-terminal; sequence EIKNHPWFLK…EDSGDFVCAL (87 aa).

It belongs to the protein kinase superfamily. Ser/Thr protein kinase family. Post-translationally, phosphorylated.

The catalysed reaction is L-seryl-[protein] + ATP = O-phospho-L-seryl-[protein] + ADP + H(+). The enzyme catalyses L-threonyl-[protein] + ATP = O-phospho-L-threonyl-[protein] + ADP + H(+). Its function is as follows. May play a role in signal transduction of hyperosmotic response. Can phosphorylate BZIP46 in vitro. In Oryza sativa subsp. indica (Rice), this protein is Serine/threonine-protein kinase SAPK2 (SAPK2).